We begin with the raw amino-acid sequence, 494 residues long: Peptidyl-prolyl cis-trans isomerase-like 4 (494 aa).

In terms of domain architecture, PPIase cyclophilin-type spans 1-172 (MSVLLETSAG…VDIRIKHTVI (172 aa)). The disordered stretch occupies residues 176 to 196 (PYPDPAGMREPSASPPPSKAQ). Positions 206-240 (EELLDVEASEEAAAEAERRRREREAAAQALTLEMM) form a coiled coil. One can recognise an RRM domain in the interval 253–331 (NVLFVCKLNP…RRIHVDFSQS (79 aa)). 2 stretches are compositionally biased toward basic and acidic residues: residues 391–418 (DLKGRHDGDKPPVRDSRPDVGGGRDRST) and 425–494 (PRRD…YRRR). Residues 391–494 (DLKGRHDGDK…NRGRDDYRRR (104 aa)) are disordered.

The protein belongs to the cyclophilin-type PPIase family. PPIL4 subfamily.

The protein resides in the nucleus. It catalyses the reaction [protein]-peptidylproline (omega=180) = [protein]-peptidylproline (omega=0). Its function is as follows. PPIases accelerate the folding of proteins. It catalyzes the cis-trans isomerization of proline imidic peptide bonds in oligopeptides. In Neurospora crassa (strain ATCC 24698 / 74-OR23-1A / CBS 708.71 / DSM 1257 / FGSC 987), this protein is Peptidyl-prolyl cis-trans isomerase-like 4 (cyp-6).